A 518-amino-acid polypeptide reads, in one-letter code: ETHYLENE INSENSITIVE 3-like 2 protein (518 aa).

The stretch at 37–73 (DDLSSDEEMEIEELEKKIWRDKQRLKRLKEMAKNGLG) forms a coiled coil. A disordered region spans residues 450–518 (FNHPNDLYRP…GQELPTSWIQ (69 aa)). Polar residues-rich tracts occupy residues 475 to 484 (PSPSTLNQNL) and 500 to 518 (GTEN…SWIQ).

It belongs to the EIN3 family. Acts as a homodimer to bind the primary ethylene response element.

The protein resides in the nucleus. Its function is as follows. Probable transcription factor acting as a positive regulator in the ethylene response pathway. Could bind the primary ethylene response element present in the ETHYLENE-RESPONSE-FACTOR1 promoter. The chain is ETHYLENE INSENSITIVE 3-like 2 protein (EIL2) from Arabidopsis thaliana (Mouse-ear cress).